The primary structure comprises 660 residues: Threonine--tRNA ligase (660 aa).

Positions 1–49 (MPDSIVHVKKGQRFLDVIKDKNVVAVKIDSVLHDLRDVAERDVDAIPVS) constitute a TGS domain. Positions 225-554 (DHRRIIAEMD…LLEHYAGKLP (330 aa)) are catalytic. Zn(2+) is bound by residues Cys-318, His-369, and His-531.

Belongs to the class-II aminoacyl-tRNA synthetase family. In terms of assembly, homodimer. The cofactor is Zn(2+).

It localises to the cytoplasm. It catalyses the reaction tRNA(Thr) + L-threonine + ATP = L-threonyl-tRNA(Thr) + AMP + diphosphate + H(+). Functionally, catalyzes the attachment of threonine to tRNA(Thr) in a two-step reaction: L-threonine is first activated by ATP to form Thr-AMP and then transferred to the acceptor end of tRNA(Thr). This Thermoplasma acidophilum (strain ATCC 25905 / DSM 1728 / JCM 9062 / NBRC 15155 / AMRC-C165) protein is Threonine--tRNA ligase.